The primary structure comprises 360 residues: Protein RecA (360 aa).

66–73 (GPESSGKT) is an ATP binding site. The interval 330–360 (DAKAIEERENPEKVKQDKEVPVNKDASDEKK) is disordered.

This sequence belongs to the RecA family.

It is found in the cytoplasm. In terms of biological role, can catalyze the hydrolysis of ATP in the presence of single-stranded DNA, the ATP-dependent uptake of single-stranded DNA by duplex DNA, and the ATP-dependent hybridization of homologous single-stranded DNAs. It interacts with LexA causing its activation and leading to its autocatalytic cleavage. This is Protein RecA from Lactobacillus johnsonii (strain CNCM I-12250 / La1 / NCC 533).